We begin with the raw amino-acid sequence, 59 residues long: UPF0434 protein Sbal_1685 (59 aa).

The protein belongs to the UPF0434 family.

The polypeptide is UPF0434 protein Sbal_1685 (Shewanella baltica (strain OS155 / ATCC BAA-1091)).